Consider the following 336-residue polypeptide: UPF0104 membrane protein MJ1595 (336 aa).

9 helical membrane passes run 9–29 (STIL…YIGL), 40–60 (NPEY…ILSA), 68–88 (ILGY…GLFI), 127–147 (VLDT…FVVT), 154–174 (YLIL…YLIA), 223–243 (WEVV…ILKL), 245–265 (LLFL…VYLI), 285–305 (VMIL…AVTL), and 306–326 (LDRL…MLII).

It belongs to the UPF0104 family.

It localises to the cell membrane. In Methanocaldococcus jannaschii (strain ATCC 43067 / DSM 2661 / JAL-1 / JCM 10045 / NBRC 100440) (Methanococcus jannaschii), this protein is UPF0104 membrane protein MJ1595.